Here is a 236-residue protein sequence, read N- to C-terminus: Sensory rhodopsin II (236 aa).

Helical transmembrane passes span 4-24 (ITTW…VLAY), 38-58 (LLLI…ALGF), 73-93 (YVDW…LAGA), 101-121 (LVVL…TPSP), 122-142 (VSYA…YLLY), 167-187 (FVVV…AGVG), and 196-216 (LVVV…ALLA). K206 is subject to N6-(retinylidene)lysine.

It belongs to the archaeal/bacterial/fungal opsin family. Post-translationally, the covalent binding of retinal to the apoprotein, bacterioopsin, generates bacteriorhodopsin.

The protein localises to the membrane. Mediates the photorepellent response. This chain is Sensory rhodopsin II (sop2), found in Haloarcula marismortui (strain ATCC 43049 / DSM 3752 / JCM 8966 / VKM B-1809) (Halobacterium marismortui).